We begin with the raw amino-acid sequence, 59 residues long: Protein translocase subunit SecE (59 aa).

Residues 30–50 traverse the membrane as a helical segment; the sequence is ITVISTVIFFVIFFALLDTGI.

The protein belongs to the SecE/SEC61-gamma family. Component of the Sec protein translocase complex. Heterotrimer consisting of SecY, SecE and SecG subunits. The heterotrimers can form oligomers, although 1 heterotrimer is thought to be able to translocate proteins. Interacts with the ribosome. Interacts with SecDF, and other proteins may be involved. Interacts with SecA.

It is found in the cell membrane. In terms of biological role, essential subunit of the Sec protein translocation channel SecYEG. Clamps together the 2 halves of SecY. May contact the channel plug during translocation. This chain is Protein translocase subunit SecE, found in Bacillus subtilis (strain 168).